We begin with the raw amino-acid sequence, 629 residues long: tRNA uridine 5-carboxymethylaminomethyl modification enzyme MnmG (629 aa).

Residue G14–G19 participates in FAD binding. An NAD(+)-binding site is contributed by G274 to F288.

It belongs to the MnmG family. In terms of assembly, homodimer. Heterotetramer of two MnmE and two MnmG subunits. It depends on FAD as a cofactor.

It is found in the cytoplasm. NAD-binding protein involved in the addition of a carboxymethylaminomethyl (cmnm) group at the wobble position (U34) of certain tRNAs, forming tRNA-cmnm(5)s(2)U34. This chain is tRNA uridine 5-carboxymethylaminomethyl modification enzyme MnmG, found in Xylella fastidiosa (strain 9a5c).